The chain runs to 530 residues: MAKVDLSKYGISNNIIVVYNPSYEDLYKAEINSENKGFEKGIVTNTGAVSVDTGKFTGRSPKDRYIVKDQITENTIWWDGNINKPISRTIWDNLKDLTIKQLNTAKKLYIIDAFCGTNNDTRMKVRFIVEVAWQAHFVTNMFIRPSNYELDHYGDPDFVVFNGSKTTNPKWKEQGLNSEIYILFNLTEKEQIIGGTWYGGEMKKGMFSMQNYYLPLKGIASMHCSANVGEKGDVAVFFGLSGTGKTTLSADPKRYLIGDDEHGWDDNGIFNYEGGCYAKVIDLSQKNEPDIWNAIRRDALLENVTVKADGTLDYSKVASKTENTRVSYPIHHINKIVLPSRAGHAKKIIYLSADAFGVLPPVSVLDEKSSQYHFLCGYTSKLAGTERGITEPIPSFSPAFGEAFLTLHPTQYANVLAKKMKEHNATAYLVNTGWNGTNKRISIQDTRAIIDAIIDESIEKAEKIYIPILNLYVPKSLSGVSKGILDPRDTYTNRGEWEEKAKSLAAKYIKNFEQYLPEGEYLISSGPQLS.

Substrate is bound by residues arginine 59, tyrosine 198, and lysine 204. Residues lysine 204, histidine 223, and 239–247 (GLSGTGKTT) each bind ATP. Lysine 204 and histidine 223 together coordinate Mn(2+). Position 260 (aspartate 260) interacts with Mn(2+). ATP-binding positions include glutamate 288, arginine 325, 440–441 (RI), and threonine 446. Position 325 (arginine 325) interacts with substrate.

The protein belongs to the phosphoenolpyruvate carboxykinase (ATP) family. Mn(2+) is required as a cofactor.

The protein localises to the cytoplasm. The enzyme catalyses oxaloacetate + ATP = phosphoenolpyruvate + ADP + CO2. It participates in carbohydrate biosynthesis; gluconeogenesis. In terms of biological role, involved in the gluconeogenesis. Catalyzes the conversion of oxaloacetate (OAA) to phosphoenolpyruvate (PEP) through direct phosphoryl transfer between the nucleoside triphosphate and OAA. In Azobacteroides pseudotrichonymphae genomovar. CFP2, this protein is Phosphoenolpyruvate carboxykinase (ATP).